The chain runs to 316 residues: 4-hydroxy-3-methylbut-2-enyl diphosphate reductase (316 aa).

Cys-17 contributes to the [4Fe-4S] cluster binding site. (2E)-4-hydroxy-3-methylbut-2-enyl diphosphate is bound by residues His-46 and His-79. Dimethylallyl diphosphate-binding residues include His-46 and His-79. Isopentenyl diphosphate is bound by residues His-46 and His-79. Residue Cys-101 coordinates [4Fe-4S] cluster. Residue His-129 coordinates (2E)-4-hydroxy-3-methylbut-2-enyl diphosphate. His-129 lines the dimethylallyl diphosphate pocket. His-129 contributes to the isopentenyl diphosphate binding site. The Proton donor role is filled by Glu-131. Thr-170 is a (2E)-4-hydroxy-3-methylbut-2-enyl diphosphate binding site. Cys-200 provides a ligand contact to [4Fe-4S] cluster. Ser-228, Ser-229, Asn-230, and Ser-273 together coordinate (2E)-4-hydroxy-3-methylbut-2-enyl diphosphate. Residues Ser-228, Ser-229, Asn-230, and Ser-273 each contribute to the dimethylallyl diphosphate site. Isopentenyl diphosphate-binding residues include Ser-228, Ser-229, Asn-230, and Ser-273.

Belongs to the IspH family. [4Fe-4S] cluster serves as cofactor.

The enzyme catalyses isopentenyl diphosphate + 2 oxidized [2Fe-2S]-[ferredoxin] + H2O = (2E)-4-hydroxy-3-methylbut-2-enyl diphosphate + 2 reduced [2Fe-2S]-[ferredoxin] + 2 H(+). The catalysed reaction is dimethylallyl diphosphate + 2 oxidized [2Fe-2S]-[ferredoxin] + H2O = (2E)-4-hydroxy-3-methylbut-2-enyl diphosphate + 2 reduced [2Fe-2S]-[ferredoxin] + 2 H(+). Its pathway is isoprenoid biosynthesis; dimethylallyl diphosphate biosynthesis; dimethylallyl diphosphate from (2E)-4-hydroxy-3-methylbutenyl diphosphate: step 1/1. The protein operates within isoprenoid biosynthesis; isopentenyl diphosphate biosynthesis via DXP pathway; isopentenyl diphosphate from 1-deoxy-D-xylulose 5-phosphate: step 6/6. Its function is as follows. Catalyzes the conversion of 1-hydroxy-2-methyl-2-(E)-butenyl 4-diphosphate (HMBPP) into a mixture of isopentenyl diphosphate (IPP) and dimethylallyl diphosphate (DMAPP). Acts in the terminal step of the DOXP/MEP pathway for isoprenoid precursor biosynthesis. This Ruegeria pomeroyi (strain ATCC 700808 / DSM 15171 / DSS-3) (Silicibacter pomeroyi) protein is 4-hydroxy-3-methylbut-2-enyl diphosphate reductase.